The chain runs to 94 residues: Aspartyl/glutamyl-tRNA(Asn/Gln) amidotransferase subunit C (94 aa).

It belongs to the GatC family. In terms of assembly, heterotrimer of A, B and C subunits.

It carries out the reaction L-glutamyl-tRNA(Gln) + L-glutamine + ATP + H2O = L-glutaminyl-tRNA(Gln) + L-glutamate + ADP + phosphate + H(+). The enzyme catalyses L-aspartyl-tRNA(Asn) + L-glutamine + ATP + H2O = L-asparaginyl-tRNA(Asn) + L-glutamate + ADP + phosphate + 2 H(+). Allows the formation of correctly charged Asn-tRNA(Asn) or Gln-tRNA(Gln) through the transamidation of misacylated Asp-tRNA(Asn) or Glu-tRNA(Gln) in organisms which lack either or both of asparaginyl-tRNA or glutaminyl-tRNA synthetases. The reaction takes place in the presence of glutamine and ATP through an activated phospho-Asp-tRNA(Asn) or phospho-Glu-tRNA(Gln). This Syntrophomonas wolfei subsp. wolfei (strain DSM 2245B / Goettingen) protein is Aspartyl/glutamyl-tRNA(Asn/Gln) amidotransferase subunit C.